A 364-amino-acid chain; its full sequence is MADALKDVPFKTVQVDALVAIKIATASGKAFPSLATGSLVGMEKNGVLEITNSFPYPEINTASADGQNDTAANLSAAAPRAKQNIAYGNEMIKFLREVNVDANNVGWYTSTSMGNFVNLNTIENQFYYQSQLNERTVALIYDVSRSSQGTLNLRAYRLSPSFVTAYKEGKFTTESLQKSSLRYQDILVELPVTVHNSHLLTSLLHQLPSEAPKEELSFPPNLAALQQDPNTPLPPLFPNYDALDLSIDPFLEKTCDLLLESIENHHTELNNYQYYQRQLAREQTKITAWQQKRKAENAARTASKQPLLPEDEWQRLFKLPAEPSRLETLLNSRQVEQYSRQVDGFAAGVTSKMFAVKSNLLPGE.

An MPN domain is found at Val-13–Phe-162.

It belongs to the eIF-3 subunit H family. Component of the eukaryotic translation initiation factor 3 (eIF-3) complex.

Its subcellular location is the cytoplasm. In terms of biological role, component of the eukaryotic translation initiation factor 3 (eIF-3) complex, which is involved in protein synthesis of a specialized repertoire of mRNAs and, together with other initiation factors, stimulates binding of mRNA and methionyl-tRNAi to the 40S ribosome. The eIF-3 complex specifically targets and initiates translation of a subset of mRNAs involved in cell proliferation. In Phaeosphaeria nodorum (strain SN15 / ATCC MYA-4574 / FGSC 10173) (Glume blotch fungus), this protein is Eukaryotic translation initiation factor 3 subunit H.